We begin with the raw amino-acid sequence, 462 residues long: Glutamate--tRNA ligase 2 (462 aa).

Residues 8 to 18 (PSPTGYLHIGG) carry the 'HIGH' region motif. The 'KMSKS' region motif lies at 236–240 (KLSKR). Lysine 239 contacts ATP.

The protein belongs to the class-I aminoacyl-tRNA synthetase family. Glutamate--tRNA ligase type 1 subfamily. Monomer.

It is found in the cytoplasm. It catalyses the reaction tRNA(Glu) + L-glutamate + ATP = L-glutamyl-tRNA(Glu) + AMP + diphosphate. Its function is as follows. Catalyzes the attachment of glutamate to tRNA(Glu) in a two-step reaction: glutamate is first activated by ATP to form Glu-AMP and then transferred to the acceptor end of tRNA(Glu). In Nitratiruptor sp. (strain SB155-2), this protein is Glutamate--tRNA ligase 2.